The sequence spans 116 residues: Large ribosomal subunit protein uL22c (116 aa).

This sequence belongs to the universal ribosomal protein uL22 family. Part of the 50S ribosomal subunit.

It localises to the plastid. Its subcellular location is the chloroplast. This protein binds specifically to 23S rRNA. In terms of biological role, the globular domain of the protein is located near the polypeptide exit tunnel on the outside of the subunit, while an extended beta-hairpin is found that lines the wall of the exit tunnel in the center of the 70S ribosome. This is Large ribosomal subunit protein uL22c (rpl22) from Psilotum nudum (Whisk fern).